A 410-amino-acid chain; its full sequence is Multifunctional CCA protein (410 aa).

Positions 8 and 11 each coordinate ATP. CTP-binding residues include glycine 8 and arginine 11. Mg(2+) contacts are provided by aspartate 21 and aspartate 23. Residues arginine 91, arginine 137, and arginine 140 each contribute to the ATP site. The CTP site is built by arginine 91, arginine 137, and arginine 140. The HD domain occupies 228–329; the sequence is TGVHVLSVLQ…LELLQSFDVY (102 aa).

It belongs to the tRNA nucleotidyltransferase/poly(A) polymerase family. Bacterial CCA-adding enzyme type 1 subfamily. Monomer. Can also form homodimers and oligomers. The cofactor is Mg(2+). It depends on Ni(2+) as a cofactor.

The catalysed reaction is a tRNA precursor + 2 CTP + ATP = a tRNA with a 3' CCA end + 3 diphosphate. It catalyses the reaction a tRNA with a 3' CCA end + 2 CTP + ATP = a tRNA with a 3' CCACCA end + 3 diphosphate. Functionally, catalyzes the addition and repair of the essential 3'-terminal CCA sequence in tRNAs without using a nucleic acid template. Adds these three nucleotides in the order of C, C, and A to the tRNA nucleotide-73, using CTP and ATP as substrates and producing inorganic pyrophosphate. tRNA 3'-terminal CCA addition is required both for tRNA processing and repair. Also involved in tRNA surveillance by mediating tandem CCA addition to generate a CCACCA at the 3' terminus of unstable tRNAs. While stable tRNAs receive only 3'-terminal CCA, unstable tRNAs are marked with CCACCA and rapidly degraded. The protein is Multifunctional CCA protein of Pseudomonas paraeruginosa (strain DSM 24068 / PA7) (Pseudomonas aeruginosa (strain PA7)).